Consider the following 76-residue polypeptide: Putative Fe(2+) transport protein A (76 aa).

The protein belongs to the FeoA family.

Functionally, might be involved in Fe(2+) ion uptake. This is Putative Fe(2+) transport protein A from Helicobacter pylori (strain ATCC 700392 / 26695) (Campylobacter pylori).